A 399-amino-acid polypeptide reads, in one-letter code: ATP phosphoribosyltransferase regulatory subunit (399 aa).

Belongs to the class-II aminoacyl-tRNA synthetase family. HisZ subfamily. In terms of assembly, heteromultimer composed of HisG and HisZ subunits.

Its subcellular location is the cytoplasm. It participates in amino-acid biosynthesis; L-histidine biosynthesis; L-histidine from 5-phospho-alpha-D-ribose 1-diphosphate: step 1/9. Functionally, required for the first step of histidine biosynthesis. May allow the feedback regulation of ATP phosphoribosyltransferase activity by histidine. This is ATP phosphoribosyltransferase regulatory subunit from Symbiobacterium thermophilum (strain DSM 24528 / JCM 14929 / IAM 14863 / T).